Reading from the N-terminus, the 243-residue chain is NifU-like scaffold protein (243 aa).

Belongs to the NifU family. Homodimer.

The protein resides in the plastid. It is found in the apicoplast. The protein operates within cofactor biosynthesis; iron-sulfur cluster biosynthesis. In terms of biological role, binds and transfers [4Fe-4S] iron-sulfur clusters to target proteins. This chain is NifU-like scaffold protein, found in Plasmodium berghei (strain Anka).